A 263-amino-acid polypeptide reads, in one-letter code: 4-hydroxy-tetrahydrodipicolinate reductase (263 aa).

10-15 serves as a coordination point for NAD(+); the sequence is GASGKM. Arginine 38 lines the NADP(+) pocket. NAD(+) contacts are provided by residues 97–99 and 123–126; these read GTT and APNF. Residue histidine 153 is the Proton donor/acceptor of the active site. Residue histidine 154 coordinates (S)-2,3,4,5-tetrahydrodipicolinate. Lysine 157 acts as the Proton donor in catalysis. 163–164 is a binding site for (S)-2,3,4,5-tetrahydrodipicolinate; the sequence is GT.

Belongs to the DapB family.

Its subcellular location is the cytoplasm. The catalysed reaction is (S)-2,3,4,5-tetrahydrodipicolinate + NAD(+) + H2O = (2S,4S)-4-hydroxy-2,3,4,5-tetrahydrodipicolinate + NADH + H(+). The enzyme catalyses (S)-2,3,4,5-tetrahydrodipicolinate + NADP(+) + H2O = (2S,4S)-4-hydroxy-2,3,4,5-tetrahydrodipicolinate + NADPH + H(+). It functions in the pathway amino-acid biosynthesis; L-lysine biosynthesis via DAP pathway; (S)-tetrahydrodipicolinate from L-aspartate: step 4/4. Functionally, catalyzes the conversion of 4-hydroxy-tetrahydrodipicolinate (HTPA) to tetrahydrodipicolinate. This is 4-hydroxy-tetrahydrodipicolinate reductase from Dehalococcoides mccartyi (strain ATCC BAA-2266 / KCTC 15142 / 195) (Dehalococcoides ethenogenes (strain 195)).